The primary structure comprises 97 residues: F-actin-capping protein subunit beta (97 aa).

Disordered stretches follow at residues 1 to 27 (RLPPQQIEKSPWSNKYDPPLEDGAMPS) and 43 to 66 (KSGSGTMNLGGSLTRQMEKDETVS). The span at 43–57 (KSGSGTMNLGGSLTR) shows a compositional bias: polar residues. Residue lysine 97 is modified to N6-acetyllysine.

Belongs to the F-actin-capping protein beta subunit family. Component of the F-actin capping complex, composed of a heterodimer of an alpha and a beta subunit. Subunit of dynactin, a multiprotein complex part of a tripartite complex with dynein and a adapter, such as BICDL1, BICD2 or HOOK3. The dynactin complex is built around ACTR1A/ACTB filament and consists of an actin-related filament composed of a shoulder domain, a pointed end and a barbed end. Its length is defined by its flexible shoulder domain. The soulder is composed of 2 DCTN1 subunits, 4 DCTN2 and 2 DCTN3. The 4 DCNT2 (via N-terminus) bind the ACTR1A filament and act as molecular rulers to determine the length. The pointed end is important for binding dynein-dynactin cargo adapters. Consists of 4 subunits: ACTR10, DCNT4, DCTN5 and DCTN6. The barbed end is composed of a CAPZA1:CAPZB heterodimers, which binds ACTR1A/ACTB filament and dynactin and stabilizes dynactin. Interacts with ARHGAP17. Interaction with RCSD1/CAPZIP. Component of the WASH complex, composed of F-actin-capping protein subunit alpha (CAPZA1, CAPZA2 or CAPZA3), F-actin-capping protein subunit beta (CAPZB), WASH (WASHC1, WASH2P, WASH3P, WASH4P, WASH5P or WASH6P), WASHC2 (WASHC2A or WASHC2C), WASHC3, WASHC4 and WASHC5. Interacts with ACTG1. Directly interacts with CRACD; this interaction decreases binding to actin.

The protein resides in the cytoplasm. The protein localises to the cytoskeleton. Its subcellular location is the myofibril. It localises to the sarcomere. In terms of biological role, F-actin-capping proteins bind in a Ca(2+)-independent manner to the fast growing ends of actin filaments (barbed end) thereby blocking the exchange of subunits at these ends. Unlike other capping proteins (such as gelsolin and severin), these proteins do not sever actin filaments. Plays a role in the regulation of cell morphology and cytoskeletal organization. Forms, with CAPZB, the barbed end of the fast growing ends of actin filaments in the dynactin complex and stabilizes dynactin structure. The dynactin multiprotein complex activates the molecular motor dynein for ultra-processive transport along microtubules. This Mesocricetus auratus (Golden hamster) protein is F-actin-capping protein subunit beta.